The sequence spans 43 residues: Protein PsbN (43 aa).

A helical transmembrane segment spans residues 5–27 (TLIAIFISCSLVSFTGYALYTAF).

This sequence belongs to the PsbN family.

Its subcellular location is the plastid. The protein localises to the chloroplast thylakoid membrane. May play a role in photosystem I and II biogenesis. The sequence is that of Protein PsbN from Lopidium concinnum (Moss).